A 203-amino-acid polypeptide reads, in one-letter code: Imidazoleglycerol-phosphate dehydratase (203 aa).

Belongs to the imidazoleglycerol-phosphate dehydratase family.

The protein localises to the cytoplasm. It catalyses the reaction D-erythro-1-(imidazol-4-yl)glycerol 3-phosphate = 3-(imidazol-4-yl)-2-oxopropyl phosphate + H2O. It participates in amino-acid biosynthesis; L-histidine biosynthesis; L-histidine from 5-phospho-alpha-D-ribose 1-diphosphate: step 6/9. The polypeptide is Imidazoleglycerol-phosphate dehydratase (Deinococcus geothermalis (strain DSM 11300 / CIP 105573 / AG-3a)).